The chain runs to 272 residues: Cell division protein FtsQ (272 aa).

Over 1 to 20 the chain is Cytoplasmic; it reads MSSYAPREIPLDIRLMQGTS. The chain crosses the membrane as a helical span at residues 21-40; that stretch reads RALFWLVALGCLFVAGHWLM. Over 41–272 the chain is Periplasmic; it reads QRNWWDIRAV…KTPQPAGRKD (232 aa). Residues 45-114 enclose the POTRA domain; that stretch reads WDIRAVRLQG…MQLAVTLQAQ (70 aa).

This sequence belongs to the FtsQ/DivIB family. FtsQ subfamily. In terms of assembly, part of a complex composed of FtsB, FtsL and FtsQ.

The protein localises to the cell inner membrane. In terms of biological role, essential cell division protein. May link together the upstream cell division proteins, which are predominantly cytoplasmic, with the downstream cell division proteins, which are predominantly periplasmic. May control correct divisome assembly. The protein is Cell division protein FtsQ of Thiomonas arsenitoxydans (strain DSM 22701 / CIP 110005 / 3As).